The following is a 353-amino-acid chain: Melanin-concentrating hormone receptor 1 (353 aa).

At 1 to 45 the chain is on the extracellular side; that stretch reads MDLQASLLSTGPNASNISDGQDNFTLAGPPPRTRSVSYINIIMPS. N-linked (GlcNAc...) asparagine glycosylation is found at Asn-13, Asn-16, and Asn-23. A helical membrane pass occupies residues 46–66; sequence VFGTICLLGIVGNSTVIFAVV. Residues 67 to 79 lie on the Cytoplasmic side of the membrane; that stretch reads KKSKLHWCSNVPD. Residues 80-100 form a helical membrane-spanning segment; sequence IFIINLSVVDLLFLLGMPFMI. The Extracellular segment spans residues 101 to 116; that stretch reads HQLMGNGVWHFGETMC. Cys-116 and Cys-194 are oxidised to a cystine. The chain crosses the membrane as a helical span at residues 117–139; the sequence is TLITAMDANSQFTSTYILTAMAI. The Cytoplasmic portion of the chain corresponds to 140 to 161; sequence DRYLATVHPISSTKFRKPSMAT. Residues 162–182 traverse the membrane as a helical segment; that stretch reads LVICLLWALSFISITPVWLYA. Over 183-204 the chain is Extracellular; sequence RLIPFPGGAVGCGIRLPNPDTD. The chain crosses the membrane as a helical span at residues 205–225; sequence LYWFTLYQFFLAFALPFVVIT. At 226-256 the chain is on the cytoplasmic side; it reads AAYVKILQRMTSSVAPASQRSIRLRTKRVTR. A helical transmembrane segment spans residues 257–277; the sequence is TAIAICLVFFVCWAPYYVLQL. The Extracellular segment spans residues 278–294; sequence TQLSISRPTLTFVYLYN. The chain crosses the membrane as a helical span at residues 295-315; that stretch reads AAISLGYANSCLNPFVYIVLC. The Cytoplasmic portion of the chain corresponds to 316 to 353; it reads ETFRKRLVLSVKPAAQGQLRTVSNAQTADEERTESKGT.

The protein belongs to the G-protein coupled receptor 1 family. Interacts with NCDN. Expressed predominantly in the brain. Expression in brain is negatively regulated by leptin. Also found in the epithelium of the tongue and kidney.

It localises to the cell membrane. Its function is as follows. Receptor for melanin-concentrating hormone, coupled to both G proteins that inhibit adenylyl cyclase and G proteins that activate phosphoinositide hydrolysis. The protein is Melanin-concentrating hormone receptor 1 of Mus musculus (Mouse).